The primary structure comprises 135 residues: Large ribosomal subunit protein mL61 (135 aa).

A compositionally biased stretch (basic and acidic residues) spans 114 to 129; it reads HHESSPENIKEAHKQD. The disordered stretch occupies residues 114–135; sequence HHESSPENIKEAHKQDYSPPSN.

It belongs to the mitochondrion-specific ribosomal protein mL61 family. In terms of assembly, component of the mitochondrial large ribosomal subunit (mt-LSU). Mature yeast 74S mitochondrial ribosomes consist of a small (37S) and a large (54S) subunit. The 37S small subunit contains a 15S ribosomal RNA (15S mt-rRNA) and at least 32 different proteins. The 54S large subunit contains a 21S rRNA (21S mt-rRNA) and at least 45 different proteins.

The protein resides in the mitochondrion. Functionally, component of the mitochondrial ribosome (mitoribosome), a dedicated translation machinery responsible for the synthesis of mitochondrial genome-encoded proteins, including at least some of the essential transmembrane subunits of the mitochondrial respiratory chain. The mitoribosomes are attached to the mitochondrial inner membrane and translation products are cotranslationally integrated into the membrane. mL61 is not essential in cells grown at 30 degrees Celsius but is required for mitochondrial translation in cells grown at 18 degrees Celsius. The sequence is that of Large ribosomal subunit protein mL61 (mrp49) from Schizosaccharomyces pombe (strain 972 / ATCC 24843) (Fission yeast).